A 488-amino-acid chain; its full sequence is Ribulose bisphosphate carboxylase large chain 2 (488 aa).

Substrate is bound by residues Asn-128 and Thr-178. Residue Lys-180 is the Proton acceptor of the active site. Position 182 (Lys-182) interacts with substrate. 3 residues coordinate Mg(2+): Lys-206, Asp-208, and Glu-209. Lys-206 is subject to N6-carboxylysine. His-298 serves as the catalytic Proton acceptor. Residues Arg-299, His-331, and Ser-383 each coordinate substrate.

The protein belongs to the RuBisCO large chain family. Type I subfamily. As to quaternary structure, heterohexadecamer of 8 large chains and 8 small chains. Mg(2+) is required as a cofactor.

The catalysed reaction is 2 (2R)-3-phosphoglycerate + 2 H(+) = D-ribulose 1,5-bisphosphate + CO2 + H2O. It catalyses the reaction D-ribulose 1,5-bisphosphate + O2 = 2-phosphoglycolate + (2R)-3-phosphoglycerate + 2 H(+). Functionally, ruBisCO catalyzes two reactions: the carboxylation of D-ribulose 1,5-bisphosphate, the primary event in carbon dioxide fixation, as well as the oxidative fragmentation of the pentose substrate. Both reactions occur simultaneously and in competition at the same active site. This Nitrobacter hamburgensis (strain DSM 10229 / NCIMB 13809 / X14) protein is Ribulose bisphosphate carboxylase large chain 2.